Reading from the N-terminus, the 150-residue chain is Large ribosomal subunit protein bL9 (150 aa).

It belongs to the bacterial ribosomal protein bL9 family.

In terms of biological role, binds to the 23S rRNA. The chain is Large ribosomal subunit protein bL9 from Lactococcus lactis subsp. cremoris (strain SK11).